The sequence spans 462 residues: Fumarate hydratase class II (462 aa).

Substrate is bound by residues 97 to 99, 127 to 130, 137 to 139, and Thr-185; these read SGT, HPND, and SSN. His-186 functions as the Proton donor/acceptor in the catalytic mechanism. Ser-316 is an active-site residue. Substrate-binding positions include Ser-317 and 322–324; that span reads KVN.

It belongs to the class-II fumarase/aspartase family. Fumarase subfamily. As to quaternary structure, homotetramer.

It localises to the cytoplasm. The catalysed reaction is (S)-malate = fumarate + H2O. Its pathway is carbohydrate metabolism; tricarboxylic acid cycle; (S)-malate from fumarate: step 1/1. Its function is as follows. Involved in the TCA cycle. Catalyzes the stereospecific interconversion of fumarate to L-malate. This chain is Fumarate hydratase class II, found in Bacillus subtilis (strain 168).